Consider the following 147-residue polypeptide: MVHLTGEEKAAVTALWGKVNVDEVGGEALGRLLVVYPWTQRFFDSFGDLSTPDAVMSNPKVKAHGKKVLGAFSDGLAHLDNLKGTFAQLSELHCDKLHVDPENFRLLGNVLVCVLAHHFGKEFTPQVQAAYQKVVAGVANALAHKYH.

Position 2 is an N-acetylvaline (V2). A Globin domain is found at 3–147 (HLTGEEKAAV…VANALAHKYH (145 aa)). T13 is modified (phosphothreonine). A Phosphoserine modification is found at S45. Position 60 is an N6-acetyllysine (K60). H64 contacts heme b. The residue at position 83 (K83) is an N6-acetyllysine. Heme b is bound at residue H93. At C94 the chain carries S-nitrosocysteine. K145 bears the N6-acetyllysine mark.

It belongs to the globin family. In terms of assembly, heterotetramer of two alpha chains and two beta chains. In terms of tissue distribution, red blood cells.

Involved in oxygen transport from the lung to the various peripheral tissues. The protein is Hemoglobin subunit beta (HBB) of Lagothrix lagotricha (Brown woolly monkey).